Reading from the N-terminus, the 377-residue chain is Gastricsin (377 aa).

An N-terminal signal peptide occupies residues Q1–A5. 2 consecutive propeptides (activation peptide) follow at residues A6 to F31 and L32 to L48. Positions Y62–A374 constitute a Peptidase A1 domain. D80 is an active-site residue. Cystine bridges form between C93–C98 and C256–C260. D265 is a catalytic residue. C299 and C332 are oxidised to a cystine.

It belongs to the peptidase A1 family. Post-translationally, each pepsinogen is converted to corresponding pepsin at pH 2.0 in part as a result of the release of a 47 AA activation segment and in part as a result of stepwise proteolytic cleavage via an intermediate form(s).

It localises to the secreted. The enzyme catalyses More restricted specificity than pepsin A, but shows preferential cleavage at Tyr-|-Xaa bonds. High activity on hemoglobin.. Hydrolyzes a variety of proteins. The sequence is that of Gastricsin (PGC) from Macaca fuscata fuscata (Japanese macaque).